The chain runs to 229 residues: DNA mismatch repair protein MutH (229 aa).

The protein belongs to the MutH family.

Its subcellular location is the cytoplasm. Functionally, sequence-specific endonuclease that cleaves unmethylated GATC sequences. It is involved in DNA mismatch repair. This chain is DNA mismatch repair protein MutH, found in Shigella flexneri.